We begin with the raw amino-acid sequence, 597 residues long: uncharacterized protein (597 aa).

5 helical membrane-spanning segments follow: residues 37–57 (VLII…LWPV), 67–87 (IFWL…LQFA), 109–129 (GGER…YAAI), 134–154 (SVSL…FIAW), and 162–182 (ALMT…LAIV). The 205-residue stretch at 393–597 (HQLARDLHDG…QITIFVPIES (205 aa)) folds into the Histidine kinase domain.

It localises to the cell membrane. This is an uncharacterized protein from Chloroflexus aurantiacus (strain ATCC 29366 / DSM 635 / J-10-fl).